The sequence spans 235 residues: Uracil-DNA glycosylase (235 aa).

Catalysis depends on aspartate 71, which acts as the Proton acceptor.

This sequence belongs to the uracil-DNA glycosylase (UDG) superfamily. UNG family.

The protein resides in the cytoplasm. It catalyses the reaction Hydrolyzes single-stranded DNA or mismatched double-stranded DNA and polynucleotides, releasing free uracil.. In terms of biological role, excises uracil residues from the DNA which can arise as a result of misincorporation of dUMP residues by DNA polymerase or due to deamination of cytosine. The polypeptide is Uracil-DNA glycosylase (Campylobacter hominis (strain ATCC BAA-381 / DSM 21671 / CCUG 45161 / LMG 19568 / NCTC 13146 / CH001A)).